Consider the following 314-residue polypeptide: Cyclin-dependent kinase 2 (314 aa).

Residues Phe-8–Phe-287 form the Protein kinase domain. ATP contacts are provided by residues Ile-14 to Val-22 and Lys-37. Phosphothreonine is present on Thr-18. Tyr-19 carries the post-translational modification Phosphotyrosine. Asp-130 acts as the Proton acceptor in catalysis. Tyr-162 carries the post-translational modification Phosphotyrosine. Position 163 is a phosphothreonine (Thr-163).

This sequence belongs to the protein kinase superfamily. CMGC Ser/Thr protein kinase family. CDC2/CDKX subfamily. Interacts with cyclin CycG.

It carries out the reaction L-seryl-[protein] + ATP = O-phospho-L-seryl-[protein] + ADP + H(+). It catalyses the reaction L-threonyl-[protein] + ATP = O-phospho-L-threonyl-[protein] + ADP + H(+). The enzyme catalyses [DNA-directed RNA polymerase] + ATP = phospho-[DNA-directed RNA polymerase] + ADP + H(+). Like Cdk1, could play a key role in the control of the eukaryotic cell cycle. This Drosophila melanogaster (Fruit fly) protein is Cyclin-dependent kinase 2.